The sequence spans 190 residues: Shikimate kinase (190 aa).

An ATP-binding site is contributed by 22–27 (GSGKST). Ser26 contributes to the Mg(2+) binding site. Asp44, Arg68, and Gly90 together coordinate substrate. ATP is bound at residue Arg127. Arg146 contributes to the substrate binding site.

This sequence belongs to the shikimate kinase family. In terms of assembly, monomer. Requires Mg(2+) as cofactor.

It is found in the cytoplasm. The enzyme catalyses shikimate + ATP = 3-phosphoshikimate + ADP + H(+). The protein operates within metabolic intermediate biosynthesis; chorismate biosynthesis; chorismate from D-erythrose 4-phosphate and phosphoenolpyruvate: step 5/7. In terms of biological role, catalyzes the specific phosphorylation of the 3-hydroxyl group of shikimic acid using ATP as a cosubstrate. The polypeptide is Shikimate kinase (Microcystis aeruginosa (strain NIES-843 / IAM M-2473)).